Reading from the N-terminus, the 191-residue chain is Elongation factor P-like protein (191 aa).

This sequence belongs to the elongation factor P family.

This chain is Elongation factor P-like protein, found in Photobacterium profundum (strain SS9).